The primary structure comprises 69 residues: Cytochrome c oxidase subunit 8A, mitochondrial (69 aa).

The N-terminal 25 residues, 1–25 (MSVLTPLLLRGLAGSARRLPVPRAQ), are a transit peptide targeting the mitochondrion. An SIFI-degron motif is present at residues 2-19 (SVLTPLLLRGLAGSARRL). Over 26–36 (IHSKPPREQLG) the chain is Mitochondrial matrix. A helical transmembrane segment spans residues 37–60 (TMDVAIGITSCFLCFLLPAGWVLS). Residues 61 to 69 (HLESYKKRE) lie on the Mitochondrial intermembrane side of the membrane.

It belongs to the cytochrome c oxidase VIII family. As to quaternary structure, component of the cytochrome c oxidase (complex IV, CIV), a multisubunit enzyme composed of 14 subunits. The complex is composed of a catalytic core of 3 subunits MT-CO1, MT-CO2 and MT-CO3, encoded in the mitochondrial DNA, and 11 supernumerary subunits COX4I, COX5A, COX5B, COX6A, COX6B, COX6C, COX7A, COX7B, COX7C, COX8 and NDUFA4, which are encoded in the nuclear genome. The complex exists as a monomer or a dimer and forms supercomplexes (SCs) in the inner mitochondrial membrane with NADH-ubiquinone oxidoreductase (complex I, CI) and ubiquinol-cytochrome c oxidoreductase (cytochrome b-c1 complex, complex III, CIII), resulting in different assemblies (supercomplex SCI(1)III(2)IV(1) and megacomplex MCI(2)III(2)IV(2)). In terms of processing, in response to mitochondrial stress, the precursor protein is ubiquitinated by the SIFI complex in the cytoplasm before mitochondrial import, leading to its degradation. Within the SIFI complex, UBR4 initiates ubiquitin chain that are further elongated or branched by KCMF1.

Its subcellular location is the mitochondrion inner membrane. The protein operates within energy metabolism; oxidative phosphorylation. In terms of biological role, component of the cytochrome c oxidase, the last enzyme in the mitochondrial electron transport chain which drives oxidative phosphorylation. The respiratory chain contains 3 multisubunit complexes succinate dehydrogenase (complex II, CII), ubiquinol-cytochrome c oxidoreductase (cytochrome b-c1 complex, complex III, CIII) and cytochrome c oxidase (complex IV, CIV), that cooperate to transfer electrons derived from NADH and succinate to molecular oxygen, creating an electrochemical gradient over the inner membrane that drives transmembrane transport and the ATP synthase. Cytochrome c oxidase is the component of the respiratory chain that catalyzes the reduction of oxygen to water. Electrons originating from reduced cytochrome c in the intermembrane space (IMS) are transferred via the dinuclear copper A center (CU(A)) of subunit 2 and heme A of subunit 1 to the active site in subunit 1, a binuclear center (BNC) formed by heme A3 and copper B (CU(B)). The BNC reduces molecular oxygen to 2 water molecules using 4 electrons from cytochrome c in the IMS and 4 protons from the mitochondrial matrix. This Carlito syrichta (Philippine tarsier) protein is Cytochrome c oxidase subunit 8A, mitochondrial (COX8A).